We begin with the raw amino-acid sequence, 331 residues long: Phosphate acyltransferase (331 aa).

This sequence belongs to the PlsX family. In terms of assembly, homodimer. Probably interacts with PlsY.

Its subcellular location is the cytoplasm. The enzyme catalyses a fatty acyl-[ACP] + phosphate = an acyl phosphate + holo-[ACP]. Its pathway is lipid metabolism; phospholipid metabolism. Functionally, catalyzes the reversible formation of acyl-phosphate (acyl-PO(4)) from acyl-[acyl-carrier-protein] (acyl-ACP). This enzyme utilizes acyl-ACP as fatty acyl donor, but not acyl-CoA. The protein is Phosphate acyltransferase of Chlorobaculum tepidum (strain ATCC 49652 / DSM 12025 / NBRC 103806 / TLS) (Chlorobium tepidum).